Here is a 243-residue protein sequence, read N- to C-terminus: Glucosamine-6-phosphate deaminase (243 aa).

Catalysis depends on Asp67, which acts as the Proton acceptor; for enolization step. Asn137 (for ring-opening step) is an active-site residue. His139 acts as the Proton acceptor; for ring-opening step in catalysis. Glu144 acts as the For ring-opening step in catalysis.

It belongs to the glucosamine/galactosamine-6-phosphate isomerase family. NagB subfamily.

It carries out the reaction alpha-D-glucosamine 6-phosphate + H2O = beta-D-fructose 6-phosphate + NH4(+). Its pathway is amino-sugar metabolism; N-acetylneuraminate degradation; D-fructose 6-phosphate from N-acetylneuraminate: step 5/5. Its function is as follows. Catalyzes the reversible isomerization-deamination of glucosamine 6-phosphate (GlcN6P) to form fructose 6-phosphate (Fru6P) and ammonium ion. The sequence is that of Glucosamine-6-phosphate deaminase from Staphylococcus epidermidis (strain ATCC 12228 / FDA PCI 1200).